Reading from the N-terminus, the 136-residue chain is Putative pre-16S rRNA nuclease (136 aa).

The protein belongs to the YqgF nuclease family.

It localises to the cytoplasm. Its function is as follows. Could be a nuclease involved in processing of the 5'-end of pre-16S rRNA. The protein is Putative pre-16S rRNA nuclease of Francisella tularensis subsp. tularensis (strain WY96-3418).